The chain runs to 292 residues: Tumor necrosis factor alpha-induced protein 8-like protein 3 (292 aa).

The disordered stretch occupies residues 81–107; sequence DAQPAARSMDSDSGEQSEGEPVTAAGP. The binding to phosphoinositides stretch occupies residues 109–292; sequence VFSSKSLALQ…INKLLDEKVL (184 aa).

It belongs to the TNFAIP8 family. Widely expressed (at protein level). Highly expressed in most carcinoma cell lines.

Its subcellular location is the cytoplasm. The protein localises to the cell membrane. Its function is as follows. Acts as a lipid transfer protein. Preferentially captures and shuttles two lipid second messengers, i.e., phosphatidylinositol 4,5- bisphosphate and phosphatidylinositol 3,4,5-trisphosphate and increases their levels in the plasma membrane. Additionally, may also function as a lipid-presenting protein to enhance the activity of the PI3K-AKT and MEK-ERK pathways. May act as a regulator of tumorigenesis through its activation of phospholipid signaling. In Homo sapiens (Human), this protein is Tumor necrosis factor alpha-induced protein 8-like protein 3 (TNFAIP8L3).